The primary structure comprises 316 residues: Olfactory receptor 2AG2 (316 aa).

Residues 1 to 30 lie on the Extracellular side of the membrane; that stretch reads MELRNSTLGSGFILVGILNDSGSPELLYAT. Residues N5 and N19 are each glycosylated (N-linked (GlcNAc...) asparagine). Residues 31 to 51 form a helical membrane-spanning segment; the sequence is FTILYMLALTSNGLLLLAITI. The Cytoplasmic portion of the chain corresponds to 52-56; that stretch reads EARLH. A helical transmembrane segment spans residues 57–77; sequence MPMYLLLGQLSLMDLLFTSVV. Topologically, residues 78 to 97 are extracellular; sequence TPKALADFLRRENTISFGGC. C97 and C179 are oxidised to a cystine. Residues 98–118 form a helical membrane-spanning segment; it reads ALQMFLALTMGSAEDLLLAFM. The Cytoplasmic portion of the chain corresponds to 119–139; it reads AYDRYVAICHPLKYMTLMSPR. Residues 140–160 traverse the membrane as a helical segment; it reads VCWIMVATSWILASLIAIGHT. Residues 161–205 are Extracellular-facing; it reads MYTMHLPFCVSWEIRHLLCEIPPLLKLACADTSRYELIIYVTGVT. Residues 206–226 traverse the membrane as a helical segment; it reads FLLLPISAIVASYTLVLFTVL. Topologically, residues 227-244 are cytoplasmic; that stretch reads RMPSNEGRKKALVTCSSH. A helical transmembrane segment spans residues 245–265; it reads LIVVGMFYGAATFMYVLPSSF. The Extracellular portion of the chain corresponds to 266 to 271; that stretch reads HSPKQD. A helical transmembrane segment spans residues 272–292; the sequence is NIISVFYTIVTPALNPLIYSL. At 293–316 the chain is on the cytoplasmic side; it reads RNKEVMRALRRVLGKYILLAHSTL.

It belongs to the G-protein coupled receptor 1 family.

The protein localises to the cell membrane. In terms of biological role, odorant receptor. The sequence is that of Olfactory receptor 2AG2 (OR2AG2) from Homo sapiens (Human).